The following is a 204-amino-acid chain: Large ribosomal subunit protein eL15 (204 aa).

The tract at residues 185 to 204 (GGSRRAAWKRKNREHMHRKR) is disordered. Residues 190–204 (AAWKRKNREHMHRKR) show a composition bias toward basic residues.

The protein belongs to the eukaryotic ribosomal protein eL15 family.

This chain is Large ribosomal subunit protein eL15 (RpL15), found in Drosophila melanogaster (Fruit fly).